A 986-amino-acid polypeptide reads, in one-letter code: Bifunctional glutamine synthetase adenylyltransferase/adenylyl-removing enzyme (986 aa).

An adenylyl removase region spans residues 1–482 (MVTTVISNVK…RYGRLFAGEE (482 aa)). The adenylyl transferase stretch occupies residues 486-986 (SRFGSLVFTG…RAAYEAVVKG (501 aa)).

It belongs to the GlnE family. Requires Mg(2+) as cofactor.

It carries out the reaction [glutamine synthetase]-O(4)-(5'-adenylyl)-L-tyrosine + phosphate = [glutamine synthetase]-L-tyrosine + ADP. The enzyme catalyses [glutamine synthetase]-L-tyrosine + ATP = [glutamine synthetase]-O(4)-(5'-adenylyl)-L-tyrosine + diphosphate. Its function is as follows. Involved in the regulation of glutamine synthetase GlnA, a key enzyme in the process to assimilate ammonia. When cellular nitrogen levels are high, the C-terminal adenylyl transferase (AT) inactivates GlnA by covalent transfer of an adenylyl group from ATP to specific tyrosine residue of GlnA, thus reducing its activity. Conversely, when nitrogen levels are low, the N-terminal adenylyl removase (AR) activates GlnA by removing the adenylyl group by phosphorolysis, increasing its activity. The regulatory region of GlnE binds the signal transduction protein PII (GlnB) which indicates the nitrogen status of the cell. In Caulobacter vibrioides (strain ATCC 19089 / CIP 103742 / CB 15) (Caulobacter crescentus), this protein is Bifunctional glutamine synthetase adenylyltransferase/adenylyl-removing enzyme.